The sequence spans 300 residues: Putative hydro-lyase Dshi_3152 (300 aa).

This sequence belongs to the D-glutamate cyclase family.

The protein is Putative hydro-lyase Dshi_3152 of Dinoroseobacter shibae (strain DSM 16493 / NCIMB 14021 / DFL 12).